The sequence spans 671 residues: MVHKKQAWAKRVKKERFKKKFLTRMQATRLLQMESVQFRRLCILKGIYPRALNRSKQKQSGNEKQYYLAREIKWLVRDQIAEKMMAYRAWEKKVKRAEAMGRSEDLKVLQTSRVKPRHSLVATIKERYPYFIDAIRDVDDAMSMIHLYAFLSPEIKSDTTIEIHHSLTSGLSERAKEVCERWDRYVARARVLTKGFISIKGYYYEAIVKGERVRWLCPHEYAHRFPPGIQQYVMLSFLEFYLEMMKFVLFKLESDLARDEADRLAAEDEEGVTRANAEDFANGAALAVLDVGANQAQAKAVKEAESKRSLMEEELHKVRELFRGLTFFISREVPAKHFALVINACGGRVATDYVPSNITHVVVDRPALPPGMKKHDQLEYVQPQYIFDCLNARLVLPVTGYRIGEELPPHVSPFSVSITNSAEDNAAVVQVKKDHPRIVGYVPARVHEIRKLINPSYSAVDPEGKVAHLEDEYSDEESHVAVPEMDMEDDVSLSGDELAEARRKPAWQEEEVTEEVQRPKLSAFKVKKQREMNLMNAPTNEVVARRRQALRKAQEKSRQTETSEARLQRKMSEVKRQEAATRKMQLQVARKKAARFYKMVSGVVQGTAKKVATLEAKAKHIAEGKLRKTEDGKGLVNKRLEARRQRAEAKGKKLKERKAGNPYKKLPKWVQ.

Coiled-coil stretches lie at residues 294-323 (NQAQAKAVKEAESKRSLMEEELHKVRELFR) and 548-584 (QALRKAQEKSRQTETSEARLQRKMSEVKRQEAATRKM). The BRCT domain maps to 317–403 (KVRELFRGLT…LVLPVTGYRI (87 aa)). 2 disordered regions span residues 552–577 (KAQEKSRQTETSEARLQRKMSEVKRQ) and 634–671 (GLVNKRLEARRQRAEAKGKKLKERKAGNPYKKLPKWVQ). Positions 634–651 (GLVNKRLEARRQRAEAKG) are enriched in basic and acidic residues.

The protein belongs to the pescadillo family.

It is found in the nucleus. Its subcellular location is the nucleolus. It localises to the nucleoplasm. Required for maturation of ribosomal RNAs and formation of the large ribosomal subunit. The polypeptide is Pescadillo homolog (Leishmania major).